The chain runs to 538 residues: NAD(P)H-quinone oxidoreductase chain 4 (538 aa).

Transmembrane regions (helical) follow at residues 11–31, 43–63, 95–115, 119–139, 143–163, 175–195, 217–237, 251–271, 285–305, 314–334, 340–360, 382–404, 425–445, and 472–492; these read FPWLSLSILFPIVGALIVPFI, YALIISLITFLITVAAYFKGF, MPLILLTSFITSLAVLAAWPV, PKLFFFLILAMDGGQIAVFAV, LLFFLAWELELFPVYLFLAIW, FIIYTAGSSLFILLAGLAMGF, GFQLLCYSGLLIAFGVKLPIV, TAPVHMLLAGILLKMGGYALL, FAPLLIVLGVVNIIYAALTSF, IAYSSISHMGFVLIGIGSFSS, AMLQMVSHGLIGASLFFLVGA, IMFALWTACAFASLALPGMSGFI, IVVASLAAIGVILTPIYLLSM, and IYIIACLLVPIIGIGLYPKIM.

The protein belongs to the complex I subunit 4 family.

The protein resides in the cellular thylakoid membrane. It catalyses the reaction a plastoquinone + NADH + (n+1) H(+)(in) = a plastoquinol + NAD(+) + n H(+)(out). The enzyme catalyses a plastoquinone + NADPH + (n+1) H(+)(in) = a plastoquinol + NADP(+) + n H(+)(out). Functionally, NDH-1 shuttles electrons from NAD(P)H, via FMN and iron-sulfur (Fe-S) centers, to quinones in the respiratory chain. The immediate electron acceptor for the enzyme in this species is believed to be plastoquinone. Couples the redox reaction to proton translocation (for every two electrons transferred, four hydrogen ions are translocated across the cytoplasmic membrane), and thus conserves the redox energy in a proton gradient. This Prochlorococcus marinus (strain NATL1A) protein is NAD(P)H-quinone oxidoreductase chain 4.